Reading from the N-terminus, the 359-residue chain is MATTHLTAALALLCALLQVDIEASSWWSLAMNPVQIPEAYIVGAQPLCSQLPGLSPGQKKLCQLYQDHMPYIGEGAKTGIKECQYQFRHRRWNCSTVDNASVFGRVMQIGSRETAFTYSISAAGVVNAVSRACREGELSTCGCSRAARPKDLQRDWLWGGCGDNLEYGYRFAKEFVDAREREKIHTKGSYESSRTLMNIHNNEAGRRTVYNLADAACKCHGVSGSCSLKTCWLQLADFRKVGDFLKEKYDSAASMRLNARGKLVQVNSRFNPPTTNDLVYVDTSPDYCVRNESTGSLGTQGRLCNKTSEGMDGCELMCCGRGYDQFKTVQTERCHCKFHWCCYVKCKKCTEIVDQFVCK.

An N-terminal signal peptide occupies residues 1-20 (MATTHLTAALALLCALLQVD). Residues Cys83 and Cys94 are joined by a disulfide bond. 2 N-linked (GlcNAc...) asparagine glycosylation sites follow: Asn93 and Asn99. Cystine bridges form between Cys133–Cys141, Cys143–Cys161, Cys217–Cys231, Cys219–Cys226, Cys288–Cys319, Cys304–Cys314, Cys318–Cys358, Cys334–Cys349, Cys336–Cys346, and Cys341–Cys342. The O-palmitoleoyl serine; by PORCN moiety is linked to residue Ser223. Residues Asn291 and Asn305 are each glycosylated (N-linked (GlcNAc...) asparagine).

This sequence belongs to the Wnt family. Palmitoleoylation is required for efficient binding to frizzled receptors. Depalmitoleoylation leads to Wnt signaling pathway inhibition. In terms of tissue distribution, neuroectodermal and non-neuroectodermal tissues.

It localises to the secreted. Its subcellular location is the extracellular space. It is found in the extracellular matrix. In terms of biological role, ligand for members of the frizzled family of seven transmembrane receptors. Can activate or inhibit canonical Wnt signaling, depending on receptor context. Required during embryogenesis for extension of the primary anterior-posterior axis. In Ambystoma mexicanum (Axolotl), this protein is Protein Wnt-5a (WNT-5A).